A 150-amino-acid chain; its full sequence is UPF0756 membrane protein ECA1265 (150 aa).

The next 4 membrane-spanning stretches (helical) occupy residues 1–21 (MAYIDPTLLILLVLAGLGIIS), 51–71 (YGLSIGIVVLTIGVMAPIASG), 82–102 (FLHWKSLLAILIGVAVSWLGG), and 127–147 (ALFRGVPVGPLIAAGLLSLLI).

Belongs to the UPF0756 family.

The protein resides in the cell membrane. The sequence is that of UPF0756 membrane protein ECA1265 from Pectobacterium atrosepticum (strain SCRI 1043 / ATCC BAA-672) (Erwinia carotovora subsp. atroseptica).